The chain runs to 449 residues: Anther-specific proline-rich protein APG (449 aa).

Positions 1 to 118 are enriched in pro residues; the sequence is PPKPQPKPPP…KPPAPSPPKP (118 aa). The tract at residues 1 to 123 is disordered; it reads PPKPQPKPPP…SPPKPQNKTI (123 aa). Ser132 serves as the catalytic Nucleophile. Residues Asp425 and His428 contribute to the active site.

The protein belongs to the 'GDSL' lipolytic enzyme family. Found in anther, only in male fertile plants.

The polypeptide is Anther-specific proline-rich protein APG (APG) (Brassica napus (Rape)).